Reading from the N-terminus, the 594-residue chain is Potassium-transporting ATPase potassium-binding subunit (594 aa).

Helical transmembrane passes span 4 to 24 (QFFGLLVFYLAILLILAPFLG), 65 to 85 (QYAVAVLIFSVLGFIAVYALQ), 136 to 156 (ALTVQNFLSAAVGMSVLFALI), 179 to 199 (LYVLLPLALALALALVSQGVI), 287 to 307 (LEMLAILIIPAALCFTFGEMV), 314 to 334 (VAILAAMTLLFVGLAWLTQNA), 361 to 381 (FGVAASALFAVVTTAASCGAV), 390 to 410 (AMGGLGPMLLMQLGEVVFGGV), 413 to 433 (GLYGMLAFALLGVFIAGLMIG), 450 to 470 (MVSIAILVTPFLVLAGTALAV), 518 to 538 (LLGLAMWFGRFLVIVAILALA), and 560 to 580 (LFIVLLIGTVLLVGALTYVPA).

This sequence belongs to the KdpA family. As to quaternary structure, the system is composed of three essential subunits: KdpA, KdpB and KdpC.

The protein resides in the cell inner membrane. Its function is as follows. Part of the high-affinity ATP-driven potassium transport (or Kdp) system, which catalyzes the hydrolysis of ATP coupled with the electrogenic transport of potassium into the cytoplasm. This subunit binds the periplasmic potassium ions and delivers the ions to the membrane domain of KdpB through an intramembrane tunnel. In Bordetella avium (strain 197N), this protein is Potassium-transporting ATPase potassium-binding subunit.